Reading from the N-terminus, the 354-residue chain is Hyaluronan and proteoglycan link protein 1 (354 aa).

Positions 1–15 (MKSLLLLVLISICGA) are excised as a propeptide. N-linked (GlcNAc...) asparagine glycosylation is found at Asn-21 and Asn-56. In terms of domain architecture, Ig-like V-type spans 38–152 (PRLLVEAEQA…EGLEDDTAVV (115 aa)). Disulfide bonds link Cys-61–Cys-139, Cys-181–Cys-252, Cys-205–Cys-226, Cys-279–Cys-349, and Cys-304–Cys-325. Link domains lie at 159-254 (VVFP…FCFT) and 259-351 (GRFY…YCFR).

This sequence belongs to the HAPLN family.

The protein localises to the secreted. The protein resides in the extracellular space. Its subcellular location is the extracellular matrix. Functionally, stabilizes the aggregates of proteoglycan monomers with hyaluronic acid in the extracellular cartilage matrix. The polypeptide is Hyaluronan and proteoglycan link protein 1 (HAPLN1) (Equus caballus (Horse)).